Consider the following 114-residue polypeptide: UPF0145 protein YG5714_0873 (114 aa).

Belongs to the UPF0145 family.

This Saccharolobus islandicus (strain Y.G.57.14 / Yellowstone #1) (Sulfolobus islandicus) protein is UPF0145 protein YG5714_0873.